Reading from the N-terminus, the 351-residue chain is uncharacterized protein (351 aa).

It belongs to the glycosyltransferase group 1 family. Glycosyltransferase 4 subfamily.

This is an uncharacterized protein from Methanocaldococcus jannaschii (strain ATCC 43067 / DSM 2661 / JAL-1 / JCM 10045 / NBRC 100440) (Methanococcus jannaschii).